Here is a 451-residue protein sequence, read N- to C-terminus: Scaffold protein ILK (451 aa).

Met1 carries the N-acetylmethionine modification. ANK repeat units follow at residues 2-30 (DDIFTQCREGNAVAVRLWLDNTENDLNQG), 31-63 (DDHGFSPLHWACREGRSAVVEMLIMRGARINVM), 64-96 (NRGDDTPLHLAASHGHRDIVQKLLQYKADINAV), 97-129 (NEHGNVPLHYACFWGQDQVAEDLVANGALVSIC), and 130-174 (NKYG…GTTR). The segment at 33-139 (HGFSPLHWAC…NKYGEMPMDK (107 aa)) is interaction with LIMS1. Thr173 is subject to Phosphothreonine. The segment at 180 to 212 (GTLNKHSGIDFKQLNFLAKLNENHSGELWKGRW) is PH-like; mediates interaction with TGFB1I1. Ser186 is subject to Phosphoserine. A Protein kinase domain is found at 193-445 (LNFLAKLNEN…PKFDMIVPIL (253 aa)). ATP-binding residues include Asn200, Asn202, His203, and Ser204. Ser246 carries the phosphoserine modification. Residues His270, Met272, and Asn279 each contribute to the ATP site. Residue Asp339 participates in Mg(2+) binding. Residue Lys341 coordinates ATP. The Nuclear localization signal motif lies at 363–371 (KKPEDTNRR). Position 425 is an N6-acetyllysine (Lys425).

It belongs to the protein kinase superfamily. TKL Ser/Thr protein kinase family. As to quaternary structure, component of the heterotrimeric IPP (ILK-PINCH-PARVIN) complex composed of ILK, LIMS1/PINCH and PARVA; the complex binds to F-actin via the C-terminal tail of LIMS1 and the N-terminal region of PARVA, promoting F-actin filament bundling. Formation of the IPP complex is dependent on protein kinase C and precedes integrin-mediated cell adhesion and spreading. ILK also interacts with LIMS2/PINCH2 and with PARVB and PARVG which may substitute for LIMS1 and PARVA in the IPP complex; PARVA and PARVB compete for the same binding site. Interaction with PARVG promotes the establishment of cell polarity required for leukocyte migration. Interacts with the cytoplasmic domain of integrin ITGB1 and may also interact with integrins ITGB2, ITGB3 and/or ITGB5. Interacts probably also with TGFB1I1. Interacts (via ANK repeats) with EPHA1 (via SAM domain); stimulated by EFNA1 but independent of the kinase activity of EPHA1. Interacts with FERMT2. Interacts with LIMD2; leading to activate the protein kinase activity. Interacts with PXN/PAXILLIN (via LD motif 4). Interacts with CCDC25 (via cytoplasmic region); initiating the ILK-PARVB cascade to induce cytoskeleton rearrangement and directional migration of cells. Interacts with IQGAP1; the interaction is required for localization of IQGAP1 to the cell cortex. In terms of processing, phosphorylation by PAK1 modulates ILK subcellular location by promoting its nuclear export.

The protein resides in the cell junction. The protein localises to the focal adhesion. It localises to the cell membrane. Its subcellular location is the cell projection. It is found in the lamellipodium. The protein resides in the cytoplasm. The protein localises to the myofibril. It localises to the sarcomere. Its subcellular location is the nucleus. It is found in the cytoskeleton. The protein resides in the microtubule organizing center. The protein localises to the centrosome. It localises to the cell cortex. Scaffold protein which mediates protein-protein interactions during a range of cellular events including focal adhesion assembly, cell adhesion and cell migration. Regulates integrin-mediated signal transduction by contributing to inside-out integrin activation. Recruits PARVA and LIMS1/PITCH to form the heterotrimeric IPP (ILK-PINCH-PARVIN) complex which binds to F-actin via the C-terminal tail of LIMS1 and the N-terminal region of PARVA, promoting F-actin filament bundling, a process required to generate force for actin cytoskeleton reorganization and subsequent dynamic cell adhesion events such as cell spreading and migration. Binding to PARVA promotes effective assembly of ILK into focal adhesions while PARVA-bound ILK can simultaneously engage integrin-beta cytoplasmic tails to mediate cell adhesion. Plays a role with PARVG in promoting the cell adhesion and spreading of leukocytes. Acts as an upstream effector of both AKT1/PKB and GSK3. Mediates trafficking of caveolae to the cell surface in an ITGB1-dependent manner by promoting the recruitment of IQGAP1 to the cell cortex which cooperates with its effector DIAPH1 to locally stabilize microtubules and allow stable insertion of caveolae into the plasma membrane. Required for the maintenance of mitotic spindle integrity by promoting phosphorylation of TACC3 by AURKA. Associates with chromatin and may act as a negative regulator of transcription when located in the nucleus. The sequence is that of Scaffold protein ILK from Cavia porcellus (Guinea pig).